The primary structure comprises 578 residues: MSSVEADEPDRATAPPSALLPEDGPGPDGTAAGPPPYARRWAALGVILGAEIMDLLDGTVMNVAAPAVRADLGGSLSVIQWITVGYTLAFAVLLVVGGRLGDIYGRKRMFVVGAVGFTAASVLCSVAAGPEMLTAARFLQGGLGALMIPQGLGLIKQMFPPKETAAAFGAFGPAIGLGAVLGPIVAGFLVDADLFGTGWRSVFLINLPIGVAVIVGAVLLLPEGKAPVRPKFDVVGMALVTSGLTLLIFPLVQGRERGWPAWAFVLMLAGAAVLVGFVAHELRQERRGGATLIELSLLRRSRYAAGLAVALVFFTGVSGMSLLLALHLQIGLGFSPTRAALTMTPWSVFLVVGAILTGAVLGSKFGRKALHGGLVVLALGVLIMLLTIGDQAGGLTSWELVPGIAVAGLGMGIMIGLLFDIALADVDKQEAGTASGVLTAVQQLGFTVGVAVLGTLFFGLLGSQATASVDDGASRARTELAAAGASTTEQDRLLADLRVCLRESASQQDSERTPDSCRNLQQARPAVAEATARAWRTAHTENFSTAMVRTLWVVIALLAVSFALAFRLPPKPREEEGF.

The tract at residues 1 to 33 (MSSVEADEPDRATAPPSALLPEDGPGPDGTAAG) is disordered. The next 12 membrane-spanning stretches (helical) occupy residues 78 to 98 (VIQWITVGYTLAFAVLLVVGG), 109 to 129 (MFVVGAVGFTAASVLCSVAAG), 135 to 155 (AARFLQGGLGALMIPQGLGLI), 170 to 190 (AFGPAIGLGAVLGPIVAGFLV), 202 to 222 (VFLINLPIGVAVIVGAVLLLP), 232 to 252 (FDVVGMALVTSGLTLLIFPLV), 259 to 279 (WPAWAFVLMLAGAAVLVGFVA), 306 to 326 (GLAVALVFFTGVSGMSLLLAL), 341 to 361 (LTMTPWSVFLVVGAILTGAVL), 369 to 389 (ALHGGLVVLALGVLIMLLTIG), 444 to 464 (LGFTVGVAVLGTLFFGLLGSQ), and 546 to 566 (AMVRTLWVVIALLAVSFALAF).

The protein belongs to the major facilitator superfamily. EmrB family.

It localises to the cell membrane. In terms of biological role, promotes the efflux of actinorhodin. The polypeptide is Probable actinorhodin transporter (actII-2) (Streptomyces coelicolor (strain ATCC BAA-471 / A3(2) / M145)).